The chain runs to 146 residues: Putative pre-16S rRNA nuclease (146 aa).

The protein belongs to the YqgF nuclease family.

It localises to the cytoplasm. Could be a nuclease involved in processing of the 5'-end of pre-16S rRNA. The chain is Putative pre-16S rRNA nuclease from Pseudomonas savastanoi pv. phaseolicola (strain 1448A / Race 6) (Pseudomonas syringae pv. phaseolicola (strain 1448A / Race 6)).